Reading from the N-terminus, the 643-residue chain is MRCRSLSHFKDDDFAVVSEVVTHKQNHIPVIKGDFVSLPKHVQRFVAEKAELMKPSAIFICDGSQNEADELIARCVERGVLVPLKAYKNNYLCRTDPRDVARVESKTWMITPEKYDSVCHTPEGVKPMMGQWMSPDEFGKELDDRFPGCMAGRTMYVIPYSMGPVGGPLSKIGIELTDSDYVVLCMRIMTRMGEPVLKALAKNNGEFVRCVHSVGQPKPVATKVINHWPCNPEKTIIAHRPAEREIWSFGSGYGGNSLLGKKCFALRIAMNIGYDEGWMAEHMLIMGVTSPKGEERFVAAAFPSACGKTNLAMLEPTIPGWKVRVIGDDIAWMKFGADGRLYAINPEYGFFGVAPGTSHKTNPMAMASFQENTIFTNVAETADGEYFWEGLEHEVKNPKVDMINWLGEPWHIGDESKAAHPNSRFTAPAGQCPIIHPDWEKPEGVPIDAIIFGGRRPEGVPLVFESRSWVHGIFVGACVKSEATAAAEHTGKQVMHDPMAMRPFMGYNFGRYMRHWMKLGQPPHKVPKIFHVNWFRQSADHKFLWPGYGDNIRVIDWILRRCSGDATIAEETPIGFIPKKGTINLEGLPNVNWDELMSIPKSYWLEDMVETKTFFENQVGSDLPPEIAKELEAQTERIKALKE.

Substrate contacts are provided by residues Arg-102 and 253-255; that span reads YGG. The Mn(2+) site is built by Lys-262 and His-282. Residue Ser-304 coordinates substrate. 305–310 is a binding site for GTP; sequence ACGKTN. Cys-306 is a catalytic residue. Asp-329 contacts Mn(2+). 422–424 is a substrate binding site; the sequence is NSR. Residues Arg-424, Arg-455, and 548–551 contribute to the GTP site; that span reads YGDN.

The protein belongs to the phosphoenolpyruvate carboxykinase [GTP] family. In terms of assembly, monomer. The cofactor is Mn(2+).

It carries out the reaction oxaloacetate + GTP = phosphoenolpyruvate + GDP + CO2. Functionally, in parasitic nematodes PEPCK carboxylates phosphoenolpyruvate to oxaloacetate thus introducing the products of glycolysis to mitochondrial metabolism. In terms of biological role, catalyzes the conversion of oxaloacetate (OAA) to phosphoenolpyruvate (PEP), the rate-limiting step in the metabolic pathway that produces glucose from lactate and other precursors derived from the citric acid cycle. The sequence is that of Phosphoenolpyruvate carboxykinase [GTP] (PEPCK) from Ascaris suum (Pig roundworm).